A 609-amino-acid polypeptide reads, in one-letter code: MAERLSVGALRIINTSDASSFPPNPILQVLTVKELNSNPTSGAPKRYRVVLSDSINYAQSMLSTQLNHLVAENKLQKGAFVQLTQFTVNVMKERKILIVLGLNVLTELGVMDKIGNPAGLETVDALRQQQNEQNNASAPRTGISTSTNSFYGNNAAATAPAPPPMMKKPAAPNSLSTIIYPIEGLSPYQNKWTIRARVTNKSEVKHWHNQRGEGKLFSVNLLDESGEIRATGFNDQVDAFYDILQEGSVYYISRCRVNIAKKQYTNVQNEYELMFERDTEIRKAEDQTAVPVAKFSFVSLQEVGDVAKDAVIDVIGVLQNVGPVQQITSRATSRGFDKRDITIVDQTGYEMRVTLWGKTAIEFSVSEESILAFKGVKVNDFQGRSLSMLTSSTMSVDPDIQESHLLKGWYDGQGRGQEFAKHSVISSTLSTTGRSAERKNIAEVQAEHLGMSETPDYFSLKGTIVYIRKKNVSYPACPAADCNKKVFDQGGSWRCEKCNKEYDAPQYRYIITIAVGDHTGQLWLNVFDDVGKLIMHKTADELNDLQENDENAFMNCMAEACYMPYIFQCRAKQDNFKGEMRVRYTVMSINQMDWKEESKRLINFIESAQ.

The segment covering 130–152 has biased composition (polar residues); sequence QNEQNNASAPRTGISTSTNSFYG. Positions 130 to 166 are disordered; that stretch reads QNEQNNASAPRTGISTSTNSFYGNNAAATAPAPPPMM. The OB DNA-binding region spans 192–278; it reads WTIRARVTNK…NEYELMFERD (87 aa). The C4-type zinc-finger motif lies at 477–498; the sequence is CPAADCNKKVFDQGGSWRCEKC.

The protein belongs to the replication factor A protein 1 family. Component of the heterotrimeric canonical replication protein A complex (RPA).

It is found in the nucleus. In terms of biological role, as part of the replication protein A (RPA/RP-A), a single-stranded DNA-binding heterotrimeric complex, may play an essential role in DNA replication, recombination and repair. Binds and stabilizes single-stranded DNA intermediates, preventing complementary DNA reannealing and recruiting different proteins involved in DNA metabolism. In Schizosaccharomyces pombe (strain 972 / ATCC 24843) (Fission yeast), this protein is Replication factor A protein 1 (ssb1).